The primary structure comprises 46 residues: Viscotoxin-C1 (46 aa).

Cystine bridges form between C3–C40, C4–C32, and C16–C26.

Monomer.

Its subcellular location is the secreted. Its function is as follows. Thionins are small plant proteins which are toxic to animal cells. They seem to exert their toxic effect at the level of the cell membrane. Their precise function is not known. This chain is Viscotoxin-C1, found in Viscum album (European mistletoe).